Here is a 110-residue protein sequence, read N- to C-terminus: UPF0060 membrane protein Rpic_4131 (110 aa).

The next 4 helical transmembrane spans lie at valine 8–leucine 28, proline 33–leucine 53, tyrosine 65–leucine 85, and tryptophan 88–glutamine 108.

This sequence belongs to the UPF0060 family.

It is found in the cell inner membrane. This is UPF0060 membrane protein Rpic_4131 from Ralstonia pickettii (strain 12J).